Reading from the N-terminus, the 64-residue chain is UPF0434 protein BAB2_0345 (64 aa).

It belongs to the UPF0434 family.

In Brucella abortus (strain 2308), this protein is UPF0434 protein BAB2_0345.